The primary structure comprises 435 residues: GPI-anchor transamidase component PIGU (435 aa).

The Cytoplasmic segment spans residues Met1 to Ala3. Residues Pro4–Ser22 traverse the membrane as a helical segment. At Ser23 to Asp78 the chain is on the lumenal side. Residues Tyr79–Ile99 form a helical membrane-spanning segment. Over Gln100–Ile136 the chain is Cytoplasmic. 4 consecutive transmembrane segments (helical) span residues Pro137 to Ser158, Thr159 to Ser178, Val179 to Leu194, and Tyr195 to Leu205. Over Tyr206–Phe222 the chain is Cytoplasmic. Lys216 serves as a coordination point for a cardiolipin. A helical transmembrane segment spans residues Trp223 to Ser244. Residues Phe245–Ser286 lie on the Lumenal side of the membrane. A helical transmembrane segment spans residues Leu287–Ile306. Over Lys307–His311 the chain is Cytoplasmic. A cardiolipin is bound at residue Lys309. 2 helical membrane-spanning segments follow: residues Pro312 to Thr331 and Val332 to Trp345. Over Asn346 to Asn354 the chain is Cytoplasmic. Residues Val355 to Leu372 traverse the membrane as a helical segment. The Lumenal segment spans residues Trp373–Ser384. Positions 383 and 385 each coordinate a 2-acyl-6-[6-phosphoethanolamine-alpha-D-mannosyl-(1-&gt;2)-6-phosphoethanolamine-alpha-D-mannosyl-(1-&gt;6)-2-phosphoethanolamine-alpha-D-mannosyl-(1-&gt;4)-alpha-D-glucosaminyl]-1-(1-radyl,2-acyl-sn-glycero-3-phospho)-1D-myo-inositol. A helical membrane pass occupies residues Asn385–Phe406. The Cytoplasmic portion of the chain corresponds to Tyr407 to Lys435.

This sequence belongs to the PIGU family. As to quaternary structure, heteropentamer. Part of the GPI-anchor transamidase complex, consisting of PIGK, PIGT, PIGS, PIGU and GAA1.

The protein resides in the endoplasmic reticulum membrane. It participates in glycolipid biosynthesis; glycosylphosphatidylinositol-anchor biosynthesis. Functionally, component of the glycosylphosphatidylinositol-anchor (GPI-anchor) transamidase (GPI-T) complex that catalyzes the formation of the linkage between a proprotein and a GPI-anchor and participates in GPI anchored protein biosynthesis. Binds the lipid portion of GPI-anchor. May act as an organizer in the transmembrane layer to recruit other subunits, and thus is essential for assembly of the complex. This Cricetulus griseus (Chinese hamster) protein is GPI-anchor transamidase component PIGU.